The primary structure comprises 344 residues: Mycothiol acetyltransferase (344 aa).

Glutamate 36 is a binding site for 1D-myo-inositol 2-(L-cysteinylamino)-2-deoxy-alpha-D-glucopyranoside. N-acetyltransferase domains follow at residues 40 to 179 (LALR…TPLP) and 187 to 344 (VTVR…PSTG). The interval 61 to 83 (ADTSGPNVPDTPGDQNAADTSTM) is disordered. Positions 73–83 (GDQNAADTSTM) are enriched in polar residues. Residue 109–111 (VVV) participates in acetyl-CoA binding. 1D-myo-inositol 2-(L-cysteinylamino)-2-deoxy-alpha-D-glucopyranoside contacts are provided by glutamate 214, lysine 253, and glutamate 272. Acetyl-CoA contacts are provided by residues 276–278 (VGV) and 283–289 (GGAGLGR). Tyrosine 310 serves as a coordination point for 1D-myo-inositol 2-(L-cysteinylamino)-2-deoxy-alpha-D-glucopyranoside. 315–320 (NVRAVR) contributes to the acetyl-CoA binding site.

This sequence belongs to the acetyltransferase family. MshD subfamily. As to quaternary structure, monomer.

It catalyses the reaction 1D-myo-inositol 2-(L-cysteinylamino)-2-deoxy-alpha-D-glucopyranoside + acetyl-CoA = mycothiol + CoA + H(+). Functionally, catalyzes the transfer of acetyl from acetyl-CoA to desacetylmycothiol (Cys-GlcN-Ins) to form mycothiol. This is Mycothiol acetyltransferase from Frankia casuarinae (strain DSM 45818 / CECT 9043 / HFP020203 / CcI3).